A 505-amino-acid chain; its full sequence is 2,3-bisphosphoglycerate-independent phosphoglycerate mutase (505 aa).

Aspartate 12 and serine 62 together coordinate Mn(2+). The Phosphoserine intermediate role is filled by serine 62. Residues histidine 123, 153–154 (RD), arginine 185, arginine 191, 257–260 (RPDR), and lysine 330 contribute to the substrate site. Mn(2+) is bound by residues aspartate 397, histidine 401, aspartate 438, histidine 439, and histidine 456.

It belongs to the BPG-independent phosphoglycerate mutase family. Monomer. It depends on Mn(2+) as a cofactor.

The enzyme catalyses (2R)-2-phosphoglycerate = (2R)-3-phosphoglycerate. Its pathway is carbohydrate degradation; glycolysis; pyruvate from D-glyceraldehyde 3-phosphate: step 3/5. Functionally, catalyzes the interconversion of 2-phosphoglycerate and 3-phosphoglycerate. This chain is 2,3-bisphosphoglycerate-independent phosphoglycerate mutase, found in Staphylococcus epidermidis (strain ATCC 35984 / DSM 28319 / BCRC 17069 / CCUG 31568 / BM 3577 / RP62A).